A 266-amino-acid chain; its full sequence is Glucosamine-6-phosphate deaminase (266 aa).

D72 (proton acceptor; for enolization step) is an active-site residue. Residue D141 is the For ring-opening step of the active site. H143 (proton acceptor; for ring-opening step) is an active-site residue. E148 serves as the catalytic For ring-opening step.

This sequence belongs to the glucosamine/galactosamine-6-phosphate isomerase family. NagB subfamily. Homohexamer.

It catalyses the reaction alpha-D-glucosamine 6-phosphate + H2O = beta-D-fructose 6-phosphate + NH4(+). Its pathway is amino-sugar metabolism; N-acetylneuraminate degradation; D-fructose 6-phosphate from N-acetylneuraminate: step 5/5. Its activity is regulated as follows. Allosterically activated by N-acetylglucosamine 6-phosphate (GlcNAc6P). In terms of biological role, catalyzes the reversible isomerization-deamination of glucosamine 6-phosphate (GlcN6P) to form fructose 6-phosphate (Fru6P) and ammonium ion. In Aeromonas hydrophila subsp. hydrophila (strain ATCC 7966 / DSM 30187 / BCRC 13018 / CCUG 14551 / JCM 1027 / KCTC 2358 / NCIMB 9240 / NCTC 8049), this protein is Glucosamine-6-phosphate deaminase.